Reading from the N-terminus, the 303-residue chain is Acetaldehyde dehydrogenase (303 aa).

Cysteine 130 functions as the Acyl-thioester intermediate in the catalytic mechanism. NAD(+) is bound by residues 161 to 169 and asparagine 272; that span reads SVGPGTRKN.

The protein belongs to the acetaldehyde dehydrogenase family.

The enzyme catalyses acetaldehyde + NAD(+) + CoA = acetyl-CoA + NADH + H(+). The chain is Acetaldehyde dehydrogenase from Verminephrobacter eiseniae (strain EF01-2).